The chain runs to 226 residues: N-acetylmuramic acid 6-phosphate phosphatase (226 aa).

Residue D12 is the Nucleophile of the active site. D12, D14, and D171 together coordinate Mg(2+). The Proton donor role is filled by D14.

Belongs to the HAD-like hydrolase superfamily. CbbY/CbbZ/Gph/YieH family. Phosphatase MupP subfamily. Mg(2+) serves as cofactor.

The catalysed reaction is N-acetyl-D-muramate 6-phosphate + H2O = N-acetyl-D-muramate + phosphate. It functions in the pathway cell wall biogenesis; peptidoglycan recycling. Functionally, specifically catalyzes the dephosphorylation of N-acetylmuramate 6-phosphate (MurNAc-6P) to MurNac. Is involved in peptidoglycan recycling as part of a cell wall recycling pathway that bypasses de novo biosynthesis of the peptidoglycan precursor UDP-MurNAc. Plays a role in intrinsic resistance to fosfomycin, which targets the de novo synthesis of UDP-MurNAc. The sequence is that of N-acetylmuramic acid 6-phosphate phosphatase from Pseudomonas aeruginosa (strain ATCC 15692 / DSM 22644 / CIP 104116 / JCM 14847 / LMG 12228 / 1C / PRS 101 / PAO1).